The following is a 60-amino-acid chain: Large ribosomal subunit protein bL32 (60 aa).

Residues 1–19 show a composition bias toward basic residues; the sequence is MGVPKRKTSKGRRDKRRAH. The disordered stretch occupies residues 1 to 20; that stretch reads MGVPKRKTSKGRRDKRRAHL.

It belongs to the bacterial ribosomal protein bL32 family.

The chain is Large ribosomal subunit protein bL32 from Syntrophobacter fumaroxidans (strain DSM 10017 / MPOB).